Here is a 125-residue protein sequence, read N- to C-terminus: uncharacterized protein (125 aa).

It is found in the plastid. It localises to the chloroplast. This is an uncharacterized protein from Guillardia theta (Cryptophyte).